Consider the following 114-residue polypeptide: Probable 4-amino-4-deoxy-L-arabinose-phosphoundecaprenol flippase subunit ArnE (114 aa).

2 helical membrane passes run 41–61 (GWLW…LLVL) and 68–88 (VAYP…HFVF). Residues 43–112 (LWLALFSLGL…VIGGVLLLSR (70 aa)) enclose the EamA domain.

The protein belongs to the ArnE family. In terms of assembly, heterodimer of ArnE and ArnF.

It localises to the cell inner membrane. Its pathway is bacterial outer membrane biogenesis; lipopolysaccharide biosynthesis. Functionally, translocates 4-amino-4-deoxy-L-arabinose-phosphoundecaprenol (alpha-L-Ara4N-phosphoundecaprenol) from the cytoplasmic to the periplasmic side of the inner membrane. The polypeptide is Probable 4-amino-4-deoxy-L-arabinose-phosphoundecaprenol flippase subunit ArnE (Pseudomonas fluorescens (strain ATCC BAA-477 / NRRL B-23932 / Pf-5)).